Consider the following 248-residue polypeptide: MGQKIHPTGFRLGVIKEHRSRWFADPARYPALLREDDLIRAYLTKQLSSAGLADIQIERKADQIDLEIRAARPGVVVGRGGSGLDALRQGLQKELSSHGSPERTIRINVVEVTRADAEAVLLAENIAQQLERRIAFRRIVRQVIQRAQRAGVQGIKIQIAGRLNGAEIARTEWTREGRIPLHTLRADIDYADHIAQTTFGVIGVKVWVFKGEVLPGQERPEQKVPLQQPKRRQQRRRPTFEDRSAVEA.

In terms of domain architecture, KH type-2 spans 39 to 113 (IRAYLTKQLS…TIRINVVEVT (75 aa)). The tract at residues 218-248 (ERPEQKVPLQQPKRRQQRRRPTFEDRSAVEA) is disordered. Over residues 238 to 248 (PTFEDRSAVEA) the composition is skewed to basic and acidic residues.

It belongs to the universal ribosomal protein uS3 family. As to quaternary structure, part of the 30S ribosomal subunit. Forms a tight complex with proteins S10 and S14.

Binds the lower part of the 30S subunit head. Binds mRNA in the 70S ribosome, positioning it for translation. This Synechococcus sp. (strain JA-3-3Ab) (Cyanobacteria bacterium Yellowstone A-Prime) protein is Small ribosomal subunit protein uS3.